The sequence spans 159 residues: Endoribonuclease YbeY (159 aa).

H117, H121, and H127 together coordinate Zn(2+).

The protein belongs to the endoribonuclease YbeY family. Requires Zn(2+) as cofactor.

It localises to the cytoplasm. Its function is as follows. Single strand-specific metallo-endoribonuclease involved in late-stage 70S ribosome quality control and in maturation of the 3' terminus of the 16S rRNA. This chain is Endoribonuclease YbeY, found in Azorhizobium caulinodans (strain ATCC 43989 / DSM 5975 / JCM 20966 / LMG 6465 / NBRC 14845 / NCIMB 13405 / ORS 571).